Here is a 322-residue protein sequence, read N- to C-terminus: ATP-dependent 6-phosphofructokinase (322 aa).

Residues G12, 73 to 74 (RF), and 103 to 106 (GDGT) each bind ATP. Residue D104 participates in Mg(2+) binding. 126 to 128 (TID) serves as a coordination point for substrate. D128 serves as the catalytic Proton acceptor. Residue R155 participates in ADP binding. Substrate contacts are provided by residues R163 and 170 to 172 (MGR). ADP is bound by residues 186 to 188 (GSE), K212, and 214 to 216 (KPS). Substrate-binding positions include E223, R245, and 251–254 (HTQR).

Belongs to the phosphofructokinase type A (PFKA) family. ATP-dependent PFK group I subfamily. Prokaryotic clade 'B1' sub-subfamily. In terms of assembly, homotetramer. Mg(2+) serves as cofactor.

The protein resides in the cytoplasm. The catalysed reaction is beta-D-fructose 6-phosphate + ATP = beta-D-fructose 1,6-bisphosphate + ADP + H(+). The protein operates within carbohydrate degradation; glycolysis; D-glyceraldehyde 3-phosphate and glycerone phosphate from D-glucose: step 3/4. Its activity is regulated as follows. Allosterically activated by ADP and other diphosphonucleosides, and allosterically inhibited by phosphoenolpyruvate. Catalyzes the phosphorylation of D-fructose 6-phosphate to fructose 1,6-bisphosphate by ATP, the first committing step of glycolysis. The polypeptide is ATP-dependent 6-phosphofructokinase (Mesomycoplasma hyopneumoniae (strain 232) (Mycoplasma hyopneumoniae)).